Here is a 273-residue protein sequence, read N- to C-terminus: MKKATQSKAWTTVQIARHPERPQFLDYVGEIFTEFDALHGDRLFGDDGAMVGGLARFDGQPVMVIGQHRGRSTREKLKHNFGMCNPEGYRKSQRLLDMAERFNLPVFTFIDTMGAYPGVGAEERGQAEAIATSLAQLSSLKVPVIATVLGEGGSGGALGIGVADRVIMLSHSIYSVISPEGCASILWKTAEKAAQASEALGLTADKLQSLGIVEYVVDEGEGAHLDPERVMQNLKVVLKQALDELLPMDANERCEARYQRLMKFGSENLGVAS.

The region spanning 1-244 (MKKATQSKAW…KVVLKQALDE (244 aa)) is the CoA carboxyltransferase C-terminal domain.

The protein belongs to the AccA family. As to quaternary structure, acetyl-CoA carboxylase is a heterohexamer composed of biotin carboxyl carrier protein (AccB), biotin carboxylase (AccC) and two subunits each of ACCase subunit alpha (AccA) and ACCase subunit beta (AccD).

The protein resides in the cytoplasm. It carries out the reaction N(6)-carboxybiotinyl-L-lysyl-[protein] + acetyl-CoA = N(6)-biotinyl-L-lysyl-[protein] + malonyl-CoA. Its pathway is lipid metabolism; malonyl-CoA biosynthesis; malonyl-CoA from acetyl-CoA: step 1/1. Functionally, component of the acetyl coenzyme A carboxylase (ACC) complex. First, biotin carboxylase catalyzes the carboxylation of biotin on its carrier protein (BCCP) and then the CO(2) group is transferred by the carboxyltransferase to acetyl-CoA to form malonyl-CoA. The polypeptide is Acetyl-coenzyme A carboxylase carboxyl transferase subunit alpha (Acinetobacter baumannii (strain ACICU)).